The following is a 1300-amino-acid chain: Sal-like protein 3 (1300 aa).

Residues 1–11 (MSRRKQAKPQH) are compositionally biased toward basic residues. Disordered stretches follow at residues 1 to 51 (MSRR…EETS), 84 to 162 (EDAP…YGAP), 234 to 258 (QRPP…PSQL), and 277 to 352 (GSGP…GSLL). The C2H2-type 1; atypical zinc-finger motif lies at 51 to 73 (SVCEKCCAEFFKWADFLEHQRSC). Positions 87 to 100 (PAPPPEDFPEPSPA) are enriched in pro residues. Ser-109 carries the post-translational modification Phosphoserine. Residues 122 to 132 (GEARPVEKEAE) show a composition bias toward basic and acidic residues. The span at 145–157 (PRPPPAAPAPPTP) shows a compositional bias: pro residues. 2 stretches are compositionally biased toward low complexity: residues 277 to 319 (GSGP…AAPA) and 329 to 352 (PQSA…GSLL). C2H2-type zinc fingers lie at residues 420–442 (HKCR…LRSH) and 448–470 (FKCN…FQRH). Residues 523–633 (PTSVGLQLPP…VDGAPTSLGS (111 aa)) are disordered. Over residues 543 to 561 (SPSATPASRSPQRPSPASS) the composition is skewed to low complexity. The span at 577–586 (VSATAESPQS) shows a compositional bias: polar residues. 3 consecutive C2H2-type zinc fingers follow at residues 679–701 (NQCV…YRTH), 707–729 (FKCK…FGVH), and 739–761 (HSCP…IRMH). The segment at 864–955 (SVENGSGESD…GSGGAPGRAG (92 aa)) is disordered. Over residues 889–910 (RSAGSPALSESSSSQALSPAPS) the composition is skewed to low complexity. Ser-919 is modified (phosphoserine). 4 consecutive C2H2-type zinc fingers follow at residues 977-999 (TVCG…YRSH), 1005-1027 (FVCA…LLTH), 1113-1135 (HNCQ…ERTH), and 1141-1163 (FGCT…MGTH). Ser-1177 carries the phosphoserine modification. Positions 1259 to 1279 (GMDKARTGSSPPIVSLDKASS) are disordered.

It belongs to the sal C2H2-type zinc-finger protein family. As to expression, widely expressed in adult with highest levels in heart. Expressed in fetal brain (in neurons of hippocampus, cortex, mediodorsal and ventrolateral thalamic nuclei, putamen, cerebellum and brainstem).

Its subcellular location is the nucleus. Functionally, probable transcription factor. This chain is Sal-like protein 3 (SALL3), found in Homo sapiens (Human).